A 467-amino-acid polypeptide reads, in one-letter code: Ribulose bisphosphate carboxylase large chain (467 aa).

Lys5 carries the N6,N6,N6-trimethyllysine modification. Asn114 and Thr164 together coordinate substrate. Catalysis depends on Lys166, which acts as the Proton acceptor. Residue Lys168 participates in substrate binding. Mg(2+)-binding residues include Lys192, Asp194, and Glu195. The residue at position 192 (Lys192) is an N6-carboxylysine. His285 functions as the Proton acceptor in the catalytic mechanism. Substrate-binding residues include Arg286, His318, and Ser370.

It belongs to the RuBisCO large chain family. Type I subfamily. In terms of assembly, heterohexadecamer of 8 large chains and 8 small chains; disulfide-linked. The disulfide link is formed within the large subunit homodimers. It depends on Mg(2+) as a cofactor. Post-translationally, the disulfide bond which can form in the large chain dimeric partners within the hexadecamer appears to be associated with oxidative stress and protein turnover.

Its subcellular location is the plastid. It is found in the chloroplast. It catalyses the reaction 2 (2R)-3-phosphoglycerate + 2 H(+) = D-ribulose 1,5-bisphosphate + CO2 + H2O. The catalysed reaction is D-ribulose 1,5-bisphosphate + O2 = 2-phosphoglycolate + (2R)-3-phosphoglycerate + 2 H(+). In terms of biological role, ruBisCO catalyzes two reactions: the carboxylation of D-ribulose 1,5-bisphosphate, the primary event in carbon dioxide fixation, as well as the oxidative fragmentation of the pentose substrate in the photorespiration process. Both reactions occur simultaneously and in competition at the same active site. This is Ribulose bisphosphate carboxylase large chain from Eriodictyon californicum (California yerba santa).